We begin with the raw amino-acid sequence, 275 residues long: MGISMILDNFLYLGAAKDTKDEKEMEKLKITHIFSCAGTVHSPEKYIIANEKFEDDETVDISEQIEKAYWFIERVRMKKGARVFIHCMAGKSRSASIVLSYLLKRDIHSLSDCLFYLHSKRLEIRPNDGFMNQLCDLELKLTNKQTLSKEIKEWRSLQSKALKTKIDVQTCHFIQPSLDSTKKANEQYLLHIQSISFTFFEIHLNQDKIIQLYQQQCQLLHSNNIDIKYFTSILQEELSNSTKKAFDFLLIHYYLDWQDIINNLLNYTNLKLNLN.

One can recognise a Tyrosine-protein phosphatase domain in the interval 2–143 (GISMILDNFL…LCDLELKLTN (142 aa)). C87 (phosphocysteine intermediate) is an active-site residue.

Belongs to the protein-tyrosine phosphatase family. Non-receptor class dual specificity subfamily.

It carries out the reaction O-phospho-L-tyrosyl-[protein] + H2O = L-tyrosyl-[protein] + phosphate. The enzyme catalyses O-phospho-L-seryl-[protein] + H2O = L-seryl-[protein] + phosphate. The catalysed reaction is O-phospho-L-threonyl-[protein] + H2O = L-threonyl-[protein] + phosphate. Functionally, has a dual specificity toward Ser/Thr and Tyr-containing proteins. This is Probable dual specificity protein phosphatase DDB_G0271350 from Dictyostelium discoideum (Social amoeba).